Here is a 357-residue protein sequence, read N- to C-terminus: Arginine kinase (357 aa).

Position 2 is an N-acetylalanine (Ala2). Residues 9–91 (KLEEGFKKLE…FDPIIEDYHK (83 aa)) form the Phosphagen kinase N-terminal domain. 64–68 (GVGVY) lines the L-arginine pocket. Residues 119-356 (FVISTRVRCG…LELIKIEKEM (238 aa)) enclose the Phosphagen kinase C-terminal domain. ATP-binding positions include 122–126 (STRVR) and His185. L-arginine is bound at residue Glu225. Arg229 contributes to the ATP binding site. Cys271 serves as a coordination point for L-arginine. Residues 280-284 (RASVH) and 309-314 (RGTRGE) each bind ATP. Glu314 is a binding site for L-arginine.

It belongs to the ATP:guanido phosphotransferase family.

It carries out the reaction L-arginine + ATP = N(omega)-phospho-L-arginine + ADP + H(+). The protein is Arginine kinase of Callinectes sapidus (Blue crab).